A 78-amino-acid chain; its full sequence is RNA-binding protein Hfq (78 aa).

A Sm domain is found at 10-69 (DPFLNALRKEHVPVSIYLVNGIKLQGNIESFDQYVVLLRNTVTQMVYKHAISTVVPARPV).

The protein belongs to the Hfq family. As to quaternary structure, homohexamer.

Its function is as follows. RNA chaperone that binds small regulatory RNA (sRNAs) and mRNAs to facilitate mRNA translational regulation in response to envelope stress, environmental stress and changes in metabolite concentrations. Also binds with high specificity to tRNAs. This is RNA-binding protein Hfq from Paraburkholderia phymatum (strain DSM 17167 / CIP 108236 / LMG 21445 / STM815) (Burkholderia phymatum).